Here is a 133-residue protein sequence, read N- to C-terminus: Large ribosomal subunit protein bL17 (133 aa).

It belongs to the bacterial ribosomal protein bL17 family. As to quaternary structure, part of the 50S ribosomal subunit. Contacts protein L32.

This Ehrlichia chaffeensis (strain ATCC CRL-10679 / Arkansas) protein is Large ribosomal subunit protein bL17.